Consider the following 268-residue polypeptide: Tryptophan synthase alpha chain (268 aa).

Catalysis depends on proton acceptor residues Glu49 and Asp60.

Belongs to the TrpA family. In terms of assembly, tetramer of two alpha and two beta chains.

The catalysed reaction is (1S,2R)-1-C-(indol-3-yl)glycerol 3-phosphate + L-serine = D-glyceraldehyde 3-phosphate + L-tryptophan + H2O. It functions in the pathway amino-acid biosynthesis; L-tryptophan biosynthesis; L-tryptophan from chorismate: step 5/5. In terms of biological role, the alpha subunit is responsible for the aldol cleavage of indoleglycerol phosphate to indole and glyceraldehyde 3-phosphate. This chain is Tryptophan synthase alpha chain, found in Escherichia coli (strain SMS-3-5 / SECEC).